The primary structure comprises 357 residues: Transcription factor PCF6 (357 aa).

The tract at residues 1–29 (MEAAVGDGEGGGGGGGRGKRGRGGGGGEM) is disordered. Residues 7 to 16 (DGEGGGGGGG) show a composition bias toward gly residues. The region spanning 52-110 (GKDRHSKVYTAKGIRDRRVRLSVATAIQFYDLQDRLGFDQPSKAIEWLINAASPAIDTL) is the TCP domain. Disordered regions lie at residues 125–162 (AADA…DKEV) and 281–307 (ANRG…QQLQ). 2 stretches are compositionally biased toward polar residues: residues 142–155 (LSNK…SETS) and 284–295 (GTLQSNSPSNMS).

In terms of assembly, forms homodimers and heterodimers.

It localises to the nucleus. Transcription activator. Binds the promoter core sequence 5'-GGNCC-3'. In Oryza sativa subsp. japonica (Rice), this protein is Transcription factor PCF6 (PCF6).